We begin with the raw amino-acid sequence, 235 residues long: MKDLLQYAACFLAIFSTGFLIVATWTDCWMVNADDSLEVSTKCRGLWWECVTNAFDGIRTCDEYDSIYAEHPLKLVVTRALMITADILAGFGFITLLLGLDCVKFLPDDPQIKVRLCFVAGTTLLIAGTPGIIGSVWYAVDVYVERSSLVLHNIFLGIQYKFGWSCWLGMAGSLGCFLAGALLTCCLYLFKDVGPERNYPYAMRKPYSTAGVSMAKSYKAPRTETAKMYAVDTRV.

The Cytoplasmic portion of the chain corresponds to 1-3; it reads MKD. A helical membrane pass occupies residues 4 to 24; it reads LLQYAACFLAIFSTGFLIVAT. Topologically, residues 25–79 are extracellular; it reads WTDCWMVNADDSLEVSTKCRGLWWECVTNAFDGIRTCDEYDSIYAEHPLKLVVTR. The helical transmembrane segment at 80-100 threads the bilayer; sequence ALMITADILAGFGFITLLLGL. Over 101–115 the chain is Cytoplasmic; that stretch reads DCVKFLPDDPQIKVR. Residues 116 to 136 traverse the membrane as a helical segment; sequence LCFVAGTTLLIAGTPGIIGSV. At 137 to 169 the chain is on the extracellular side; it reads WYAVDVYVERSSLVLHNIFLGIQYKFGWSCWLG. Residues 170 to 190 traverse the membrane as a helical segment; the sequence is MAGSLGCFLAGALLTCCLYLF. Over 191-235 the chain is Cytoplasmic; that stretch reads KDVGPERNYPYAMRKPYSTAGVSMAKSYKAPRTETAKMYAVDTRV. Positions 233–235 match the Interaction with TJP1 motif; it reads TRV.

This sequence belongs to the claudin family. In terms of assembly, can form heteropolymeric tight junction strands with other claudins. Interacts with CLDN19. Cannot form tight junction strands on its own. Interacts (via PDZ-binding motif TRV) with TJP1 (via PDZ domain). Expressed in the corticomedullary axis of the TAL, specifically in the cortex and the outer stripe of outer medulla (OSOM) zone (at protein level).

It localises to the cell junction. The protein resides in the tight junction. The protein localises to the cell membrane. The catalysed reaction is Mg(2+)(in) = Mg(2+)(out). It carries out the reaction Ca(2+)(in) = Ca(2+)(out). The enzyme catalyses Na(+)(in) = Na(+)(out). It catalyses the reaction K(+)(in) = K(+)(out). The catalysed reaction is Rb(+)(in) = Rb(+)(out). It carries out the reaction Cs(+)(in) = Cs(+)(out). The enzyme catalyses Li(+)(in) = Li(+)(out). Functionally, forms paracellular channels: coassembles with CLDN19 into tight junction strands with cation-selective channels through the strands, conveying epithelial permeability in a process known as paracellular tight junction permeability. Involved in the maintenance of ion gradients along the nephron. In the thick ascending limb (TAL) of Henle's loop, facilitates sodium paracellular permeability from the interstitial compartment to the lumen, contributing to the lumen-positive transepithelial potential that drives paracellular magnesium and calcium reabsorption. The chain is Claudin-16 from Mus musculus (Mouse).